A 509-amino-acid polypeptide reads, in one-letter code: Light-independent protochlorophyllide reductase subunit B (509 aa).

Residue Asp36 coordinates [4Fe-4S] cluster. The active-site Proton donor is Asp298. Substrate is bound at residue 433 to 434; that stretch reads GM.

Belongs to the ChlB/BchB/BchZ family. Protochlorophyllide reductase is composed of three subunits; ChlL, ChlN and ChlB. Forms a heterotetramer of two ChlB and two ChlN subunits. The cofactor is [4Fe-4S] cluster.

Its subcellular location is the plastid. The protein localises to the chloroplast. The catalysed reaction is chlorophyllide a + oxidized 2[4Fe-4S]-[ferredoxin] + 2 ADP + 2 phosphate = protochlorophyllide a + reduced 2[4Fe-4S]-[ferredoxin] + 2 ATP + 2 H2O. It participates in porphyrin-containing compound metabolism; chlorophyll biosynthesis (light-independent). In terms of biological role, component of the dark-operative protochlorophyllide reductase (DPOR) that uses Mg-ATP and reduced ferredoxin to reduce ring D of protochlorophyllide (Pchlide) to form chlorophyllide a (Chlide). This reaction is light-independent. The NB-protein (ChlN-ChlB) is the catalytic component of the complex. This chain is Light-independent protochlorophyllide reductase subunit B, found in Ephedra altissima (High-climbing jointfir).